A 109-amino-acid chain; its full sequence is U-scoloptoxin(16)-Cw1a (109 aa).

The N-terminal stretch at 1 to 21 (MNAVFIVFLSAILSYPHESFA) is a signal peptide.

It belongs to the scoloptoxin-16 family. Post-translationally, contains 4 disulfide bonds. In terms of tissue distribution, expressed by the venom gland.

The protein resides in the secreted. This Cormocephalus westwoodi (Westwood's green centipede) protein is U-scoloptoxin(16)-Cw1a.